Consider the following 273-residue polypeptide: MAMAYEEARKLRLQENHKRFQSNFVALPQFQLLQQRNHKPIDKALLATAEPRRSSRVRTVISSYRDDVVVDTGRTSNLRRSRHSSTWATYISRPLHECKFASYEEKVGAFKAAEKFQRSLKSPHPYFVKSMVRSHVYSCFWLGLPSRFCADNFPEETMEIELEDEEGEVYEAVYIGRRAGLSGGWKRFALDHKLDDGDALLFELVEPKKFKIYVFKGNENANLTSARKRGRATTPSEEEEEEEDKDVEESGDEEHSSRATKRSSVRLLRKRKA.

The segment at residues 127–218 is a DNA-binding region (TF-B3); sequence FVKSMVRSHV…KFKIYVFKGN (92 aa). Positions 225–273 are disordered; the sequence is SARKRGRATTPSEEEEEEEDKDVEESGDEEHSSRATKRSSVRLLRKRKA. The segment covering 236 to 252 has biased composition (acidic residues); it reads SEEEEEEEDKDVEESGD. Over residues 258 to 273 the composition is skewed to basic residues; it reads RATKRSSVRLLRKRKA.

Its subcellular location is the nucleus. In Arabidopsis thaliana (Mouse-ear cress), this protein is Putative B3 domain-containing protein At5g58280.